A 370-amino-acid polypeptide reads, in one-letter code: 3-dehydroquinate synthase (370 aa).

NAD(+) is bound by residues 107 to 111, 131 to 132, K144, and K153; these read GVIGD and TS. Residues E186, H249, and H267 each coordinate Zn(2+).

It belongs to the sugar phosphate cyclases superfamily. Dehydroquinate synthase family. Co(2+) serves as cofactor. Requires Zn(2+) as cofactor. It depends on NAD(+) as a cofactor.

Its subcellular location is the cytoplasm. The enzyme catalyses 7-phospho-2-dehydro-3-deoxy-D-arabino-heptonate = 3-dehydroquinate + phosphate. Its pathway is metabolic intermediate biosynthesis; chorismate biosynthesis; chorismate from D-erythrose 4-phosphate and phosphoenolpyruvate: step 2/7. Its function is as follows. Catalyzes the conversion of 3-deoxy-D-arabino-heptulosonate 7-phosphate (DAHP) to dehydroquinate (DHQ). This is 3-dehydroquinate synthase from Ruegeria pomeroyi (strain ATCC 700808 / DSM 15171 / DSS-3) (Silicibacter pomeroyi).